The chain runs to 689 residues: Elongation factor G (689 aa).

The tr-type G domain occupies 9-283 (AKFRNIGIMA…AIVEFMPSPL (275 aa)). GTP contacts are provided by residues 18 to 25 (AHIDAGKT), 82 to 86 (DTPGH), and 136 to 139 (NKMD).

This sequence belongs to the TRAFAC class translation factor GTPase superfamily. Classic translation factor GTPase family. EF-G/EF-2 subfamily.

Its subcellular location is the cytoplasm. Its function is as follows. Catalyzes the GTP-dependent ribosomal translocation step during translation elongation. During this step, the ribosome changes from the pre-translocational (PRE) to the post-translocational (POST) state as the newly formed A-site-bound peptidyl-tRNA and P-site-bound deacylated tRNA move to the P and E sites, respectively. Catalyzes the coordinated movement of the two tRNA molecules, the mRNA and conformational changes in the ribosome. This chain is Elongation factor G, found in Clostridium botulinum (strain Kyoto / Type A2).